Reading from the N-terminus, the 303-residue chain is Glutathione transport system permease protein GsiD (303 aa).

6 helical membrane passes run Ala-40 to Ile-60, Leu-105 to Leu-125, Leu-144 to Ile-164, Ala-165 to Gly-185, Ile-222 to Phe-242, and Val-266 to Phe-286. Positions Ala-101 to Gly-290 constitute an ABC transmembrane type-1 domain.

Belongs to the binding-protein-dependent transport system permease family. The complex is composed of two ATP-binding proteins (GsiA), two transmembrane proteins (GsiC and GsiD) and a solute-binding protein (GsiB).

It is found in the cell inner membrane. Its function is as follows. Part of the ABC transporter complex GsiABCD involved in glutathione import. Probably responsible for the translocation of the substrate across the membrane. The protein is Glutathione transport system permease protein GsiD of Escherichia coli O1:K1 / APEC.